A 493-amino-acid polypeptide reads, in one-letter code: Cytochrome P450 710A3 (493 aa).

Residues 5–25 (VSLFASLTPYLVSALLLFLLL) traverse the membrane as a helical segment. A heme-binding site is contributed by cysteine 435.

The protein belongs to the cytochrome P450 family. It depends on heme as a cofactor. As to expression, expressed in stems. Detected in primary root caps and immature petals.

It is found in the membrane. The catalysed reaction is 5-dehydroepisterol + NADPH + O2 + H(+) = ergosta-5,7,22,24(28)-tetraen-3beta-ol + NADP(+) + 2 H2O. In terms of biological role, required to form the C-22 double bond in the sterol side chain. Possesses in vitro C-22 desaturase activity toward beta-sitosterol and produces stigmasterol. This chain is Cytochrome P450 710A3, found in Arabidopsis thaliana (Mouse-ear cress).